The following is a 340-amino-acid chain: Outer membrane protein B (340 aa).

Residues M1–A26 form the signal peptide.

Belongs to the chlamydial OMP family.

Its subcellular location is the cell outer membrane. The protein is Outer membrane protein B (ompB) of Chlamydia trachomatis serovar D (strain ATCC VR-885 / DSM 19411 / UW-3/Cx).